The primary structure comprises 370 residues: 2-Hydroxyacid oxidase 1 (370 aa).

The 365-residue stretch at 1–365 (MLPRLICIND…DKTLVRKNPL (365 aa)) folds into the FMN hydroxy acid dehydrogenase domain. Tyrosine 26 contacts glyoxylate. FMN is bound by residues 79–81 (ATA), serine 108, and glutamine 130. Tyrosine 132 is a glyoxylate binding site. Threonine 158 serves as a coordination point for FMN. Glyoxylate is bound at residue arginine 167. Lysine 184 is modified (N6-succinyllysine). Serine 194 and serine 230 each carry phosphoserine. Lysine 236 and serine 258 together coordinate FMN. The glyoxylate site is built by histidine 260 and arginine 263. Histidine 260 serves as the catalytic Proton acceptor. FMN-binding positions include 291-295 (DGGVR) and 314-315 (GR). Residues 368–370 (SKI) carry the Microbody targeting signal motif.

This sequence belongs to the FMN-dependent alpha-hydroxy acid dehydrogenase family. In terms of assembly, homotetramer. It depends on FMN as a cofactor. Highly expressed in liver.

It is found in the peroxisome matrix. The catalysed reaction is a (2S)-2-hydroxycarboxylate + O2 = a 2-oxocarboxylate + H2O2. It carries out the reaction glycolate + O2 = glyoxylate + H2O2. It catalyses the reaction glyoxylate + O2 + H2O = oxalate + H2O2 + H(+). The enzyme catalyses 2-hydroxyhexadecanoate + O2 = 2-oxohexadecanoate + H2O2. The catalysed reaction is 2-hydroxyoctanoate + O2 = 2-oxooctanoate + H2O2. Its pathway is amino-acid biosynthesis; glycine biosynthesis. Its activity is regulated as follows. Inhibited by its product oxalate. Inhibited by high concentrations of dichlorophenolindophenol (DCIP) in vitro. Its function is as follows. Broad substrate specificity (S)-2-hydroxy-acid oxidase that preferentially oxidizes glycolate. The glyoxylate produced by the oxidation of glycolate can then be utilized by alanine-glyoxylate aminotransferase for the peroxisomal synthesis of glycine; this pathway appears to be an important step for the detoxification of glyoxylate which, if allowed to accumulate, may be metabolized to oxalate with formation of kidney stones. Can also catalyze the oxidation of glyoxylate, and long chain hydroxyacids such as 2-hydroxyhexadecanoate and 2-hydroxyoctanoate, albeit with much lower catalytic efficiency. Active in vitro with the artificial electron acceptor 2,6-dichlorophenolindophenol (DCIP), but O2 is believed to be the physiological electron acceptor, leading to the production of H2O2. Is not active on L-lactate and 2-hydroxybutanoate. In Homo sapiens (Human), this protein is 2-Hydroxyacid oxidase 1.